The chain runs to 461 residues: Nuclear distribution protein PAC1 (461 aa).

Residues 9-41 (QAEELHKSIIAYLTANNLLDTANTLRAELNLNE) form the LisH domain. The stretch at 61 to 88 (TSVVRLQKKIMDLESRMSAMQAELDNAT) forms a coiled coil. 8 WD repeats span residues 114 to 155 (SHRD…RTIK), 157 to 197 (HTRA…KNIR), 201 to 248 (GHDH…CLRT), 251 to 290 (GHTAWVRDVFPSPDGRFLLSTGDDSTARLWDISVSNPETK), 312 to 355 (QYLS…LLTL), 357 to 396 (GHDNWIRALAFHPGGKYLFSVSDDRTLRCWDLSQEGKCIK), 401 to 446 (AHER…IRCV), and 448 to 461 (ATGGVDMKLRIFAN).

It belongs to the WD repeat LIS1/nudF family. Self-associates. Interacts with NDL1 and dynein.

Its subcellular location is the cytoplasm. The protein localises to the cytoskeleton. The protein resides in the spindle pole. Its function is as follows. Positively regulates the activity of the minus-end directed microtubule motor protein dynein. May enhance dynein-mediated microtubule sliding by targeting dynein to the microtubule plus end. Required for nuclear migration during vegetative growth as well as development. Required for retrograde early endosome (EE) transport from the hyphal tip. Required for localization of dynein to the mitotic spindle poles. Recruits additional proteins to the dynein complex at SPBs. In Arthroderma benhamiae (strain ATCC MYA-4681 / CBS 112371) (Trichophyton mentagrophytes), this protein is Nuclear distribution protein PAC1.